Reading from the N-terminus, the 229-residue chain is 1-(5-phosphoribosyl)-5-[(5-phosphoribosylamino)methylideneamino] imidazole-4-carboxamide isomerase (229 aa).

Asp-8 serves as the catalytic Proton acceptor. The active-site Proton donor is the Asp-125.

It belongs to the HisA/HisF family.

The protein resides in the cytoplasm. It catalyses the reaction 1-(5-phospho-beta-D-ribosyl)-5-[(5-phospho-beta-D-ribosylamino)methylideneamino]imidazole-4-carboxamide = 5-[(5-phospho-1-deoxy-D-ribulos-1-ylimino)methylamino]-1-(5-phospho-beta-D-ribosyl)imidazole-4-carboxamide. The protein operates within amino-acid biosynthesis; L-histidine biosynthesis; L-histidine from 5-phospho-alpha-D-ribose 1-diphosphate: step 4/9. In Thermococcus onnurineus (strain NA1), this protein is 1-(5-phosphoribosyl)-5-[(5-phosphoribosylamino)methylideneamino] imidazole-4-carboxamide isomerase.